Reading from the N-terminus, the 180-residue chain is uncharacterized protein (180 aa).

The signal sequence occupies residues 1–24 (MKKKTIFQCVILFFSILNIHVGMA).

In terms of biological role, part of the elfADCG-ycbUVF fimbrial operon, which promotes adhesion of bacteria to different abiotic surfaces. This is an uncharacterized protein from Escherichia coli (strain K12).